The sequence spans 877 residues: Envelope glycoprotein gp160 (877 aa).

A signal peptide spans 1–19; it reads MKLTLLIGILLIGIGVVLN. Topologically, residues 20–707 are extracellular; it reads TRQQWVTVFY…SWFDFSKWLN (688 aa). N-linked (GlcNAc...) asparagine; by host glycans are attached at residues Asn-36, Asn-69, Asn-118, Asn-135, Asn-148, Asn-158, Asn-173, Asn-204, Asn-216, Asn-258, Asn-261, Asn-272, Asn-282, Asn-288, Asn-300, Asn-312, Asn-322, Asn-379, Asn-420, Asn-431, Asn-495, and Asn-498. Cystine bridges form between Cys-102–Cys-224, Cys-109–Cys-215, Cys-114–Cys-174, Cys-237–Cys-267, and Cys-247–Cys-259. Positions 114–173 are V1; sequence CVELNSSEPTTTPKSTTASTTNITASTTTLPCVQNKTSTVLESCNETIIEKELNEEPASN. Residues 174 to 215 form a V2 region; that stretch reads CTFAMAGYVRDQKKKYSVVWNDAEIMCKKGNNSNRECYMIHC. Residues 317-349 form a V3 region; it reads CKRPGNKTVLPVTIMAGLVFHSQRYNTRLRQAW. Cys-317 and Cys-350 are joined by a disulfide. Cystine bridges form between Cys-402–Cys-478 and Cys-409–Cys-451. The interval 409–451 is V4; the sequence is CKMDWFLNYLNNRTVDPDHNPCNGTKGKGKAPGPCAQRTYVAC. The interval 494-501 is V5; it reads KNRTNVTL. Residues 544–564 are fusion peptide; it reads VPFVLGFLGFLGAAGTAMGAA. The segment at 607-623 is immunosuppression; the sequence is LNARVTALEKYLEDQAR. N-linked (GlcNAc...) asparagine; by host glycosylation is found at Asn-652 and Asn-668. Residues 668–692 are a coiled coil; the sequence is NITTQLEEARAQEEKNLDAYQKLSS. Positions 689 to 710 are MPER; binding to GalCer; that stretch reads KLSSWSDFWSWFDFSKWLNILK. A helical membrane pass occupies residues 708–728; sequence ILKIGFLDVLGIIGLRLLYTV. At 729–877 the chain is on the cytoplasmic side; it reads YSCIARVRQG…VRQGLEGILN (149 aa). The short motif at 739–742 is the YXXL motif; contains endocytosis signal element; it reads YSPL. The tract at residues 751–779 is disordered; that stretch reads WKGQPDNAEGPGEGGDKRKNSSEPWQKES.

As to quaternary structure, the mature envelope protein (Env) consists of a homotrimer of non-covalently associated gp120-gp41 heterodimers. The resulting complex protrudes from the virus surface as a spike. Interacts with host CD4 and CCR5. Gp120 also interacts with the C-type lectins CD209/DC-SIGN and CLEC4M/DC-SIGNR (collectively referred to as DC-SIGN(R)). The mature envelope protein (Env) consists of a homotrimer of non-covalently associated gp120-gp41 heterodimers. The resulting complex protrudes from the virus surface as a spike. Post-translationally, specific enzymatic cleavages in vivo yield mature proteins. Envelope glycoproteins are synthesized as an inactive precursor that is heavily N-glycosylated and processed likely by host cell furin in the Golgi to yield the mature SU and TM proteins. The cleavage site between SU and TM requires the minimal sequence [KR]-X-[KR]-R.

The protein resides in the virion membrane. Its subcellular location is the host cell membrane. It is found in the host endosome membrane. Functionally, the surface protein gp120 (SU) attaches the virus to the host lymphoid cell by binding to the primary receptor CD4. This interaction induces a structural rearrangement creating a high affinity binding site for a chemokine coreceptor like CCR5. This peculiar 2 stage receptor-interaction strategy allows gp120 to maintain the highly conserved coreceptor-binding site in a cryptic conformation, protected from neutralizing antibodies. These changes are transmitted to the transmembrane protein gp41 and are thought to activate its fusogenic potential by unmasking its fusion peptide. In terms of biological role, surface protein gp120 (SU) may target the virus to gut-associated lymphoid tissue (GALT) by binding host ITGA4/ITGB7 (alpha-4/beta-7 integrins), a complex that mediates T-cell migration to the GALT. Interaction between gp120 and ITGA4/ITGB7 would allow the virus to enter GALT early in the infection, infecting and killing most of GALT's resting CD4+ T-cells. This T-cell depletion is believed to be the major insult to the host immune system leading to AIDS. The surface protein gp120 is a ligand for CD209/DC-SIGN and CLEC4M/DC-SIGNR, which are respectively found on dendritic cells (DCs), and on endothelial cells of liver sinusoids and lymph node sinuses. These interactions allow capture of viral particles at mucosal surfaces by these cells and subsequent transmission to permissive cells. DCs are professional antigen presenting cells, critical for host immunity by inducing specific immune responses against a broad variety of pathogens. They act as sentinels in various tissues where they take up antigen, process it, and present it to T-cells following migration to lymphoid organs. SIV subverts the migration properties of dendritic cells to gain access to CD4+ T-cells in lymph nodes. Virus transmission to permissive T-cells occurs either in trans (without DCs infection, through viral capture and transmission), or in cis (following DCs productive infection, through the usual CD4-gp120 interaction), thereby inducing a robust infection. In trans infection, bound virions remain infectious over days and it is proposed that they are not degraded, but protected in non-lysosomal acidic organelles within the DCs close to the cell membrane thus contributing to the viral infectious potential during DCs' migration from the periphery to the lymphoid tissues. On arrival at lymphoid tissues, intact virions recycle back to DCs' cell surface allowing virus transmission to CD4+ T-cells. Virion capture also seems to lead to MHC-II-restricted viral antigen presentation, and probably to the activation of SIV-specific CD4+ cells. Its function is as follows. The transmembrane protein gp41 (TM) acts as a class I viral fusion protein. Under the current model, the protein has at least 3 conformational states: pre-fusion native state, pre-hairpin intermediate state, and post-fusion hairpin state. During fusion of viral and target intracellular membranes, the coiled coil regions (heptad repeats) assume a trimer-of-hairpins structure, positioning the fusion peptide in close proximity to the C-terminal region of the ectodomain. The formation of this structure appears to drive apposition and subsequent fusion of viral and target cell membranes. Complete fusion occurs in host cell endosomes. The virus undergoes clathrin-dependent internalization long before endosomal fusion, thus minimizing the surface exposure of conserved viral epitopes during fusion and reducing the efficacy of inhibitors targeting these epitopes. Membranes fusion leads to delivery of the nucleocapsid into the cytoplasm. Functionally, the envelope glycoprotein gp160 precursor down-modulates cell surface CD4 antigen by interacting with it in the endoplasmic reticulum and blocking its transport to the cell surface. In terms of biological role, the gp120-gp41 heterodimer allows rapid transcytosis of the virus through CD4 negative cells such as simple epithelial monolayers of the intestinal, rectal and endocervical epithelial barriers. Both gp120 and gp41 specifically recognize glycosphingolipids galactosyl-ceramide (GalCer) or 3' sulfo-galactosyl-ceramide (GalS) present in the lipid rafts structures of epithelial cells. Binding to these alternative receptors allows the rapid transcytosis of the virus through the epithelial cells. This transcytotic vesicle-mediated transport of virions from the apical side to the basolateral side of the epithelial cells does not involve infection of the cells themselves. The chain is Envelope glycoprotein gp160 (env) from Cercopithecidae (Old World monkeys).